The sequence spans 65 residues: Adrenergic toxin rho-elapitoxin-Dp1a (65 aa).

Intrachain disulfides connect C3–C24, C17–C42, C46–C57, and C58–C63.

Belongs to the three-finger toxin family. Short-chain subfamily. Aminergic toxin sub-subfamily. As to expression, expressed by the venom gland.

Its subcellular location is the secreted. Functionally, this toxin shows activities on different G-protein coupled receptors. It is highly potent on various alpha-adrenoceptors (ADRA) (subnanomolar affinity for ADRA1A). Order of potency is the following: ADRA1A &gt; ADRA1B &gt; ADRA1D &gt; ADRA2C. It is also found to reversibly bind to muscarinic acetylcholine receptors (CHRM), but the affinity is much weaker (CHRM1 and CHRM2, Ki&gt;1 uM; CHRM3, Ki=140 nM; CHRM4, Ki=120 nM; CHRM5, Ki=350 nM). The sequence is that of Adrenergic toxin rho-elapitoxin-Dp1a from Dendroaspis polylepis polylepis (Black mamba).